We begin with the raw amino-acid sequence, 458 residues long: MSKDKLWGGRFTQPTDKFVEEFTASIDFDKRLYHQDIRGSIAHARMLGKQRIIPMEDVEKIVHGLQEILDQIEAGKFDFSISLEDIHMNIESRLSAKIGEAGKRLHTGRSRNDQVALDIRLYLRDELVEISAYLDLLVDSLLTQAEKNIDVIMPGYTHLQTAQPILFAHHMLAYVEMFKRDKGRMEDCLKRTNILPLGAGALAGTTFPIDREHVAELLDFPEVTRNSLDSVSDRDFALEFLADASILMMHLSRFSEELILWSTSEFKFIDLSDGFCTGSSIMPQKKNPDVPELVRGKTGRVYGNLMALLTVMKSLPLAYNKDMQEDKEPLFDTIDTVKGSLKIFADMIREMQVNTDTMRNAAAKGFSTATDVADYLVRKGMPFRDAHEVVGKSVAYCIANKKDLPELAIEEWKGFSPMIDTDIYEAITLEASVNARRATGGTSLEGVKREIARVRAGK.

It belongs to the lyase 1 family. Argininosuccinate lyase subfamily.

The protein resides in the cytoplasm. The enzyme catalyses 2-(N(omega)-L-arginino)succinate = fumarate + L-arginine. The protein operates within amino-acid biosynthesis; L-arginine biosynthesis; L-arginine from L-ornithine and carbamoyl phosphate: step 3/3. The sequence is that of Argininosuccinate lyase from Geotalea daltonii (strain DSM 22248 / JCM 15807 / FRC-32) (Geobacter daltonii).